The chain runs to 652 residues: Endoplasmic reticulum chaperone BiP (652 aa).

Residues 1 to 16 (MRHLLLALLLLGGARA) form the signal peptide. ATP contacts are provided by residues 34 to 37 (GTTY), K94, 225 to 227 (GGT), 291 to 298 (EKAKRALS), and 362 to 365 (GSTR). Residues 123 to 278 (KPHIQVDVGG…KKKTGKDVRK (156 aa)) form a nucleotide-binding (NBD) region. Residues 407-417 (QDTGDLVLLDV) are interdomain linker. Residues 418–498 (CPLTLGIETV…PRGVPQIEVT (81 aa)) form a substrate-binding (SBD) region. A disordered region spans residues 630 to 652 (SKLYGSAGPPPTGEEEAAEKDEL). Positions 642-652 (GEEEAAEKDEL) are enriched in acidic residues. The short motif at 649–652 (KDEL) is the Prevents secretion from ER element.

Belongs to the heat shock protein 70 family. As to quaternary structure, monomer and homooligomer; homooligomerization via the interdomain linker inactivates the chaperone activity and acts as a storage of HSPA5/BiP molecules. Interacts with DNAJC10. Interacts with DNAJB9/ERdj4; leading to recruit HSPA5/BiP to ERN1/IRE1. Interacts with ERN1/IRE1; interaction takes place following interaction with DNAJB9/ERdj4 and leads to inactivate ERN1/IRE1.

It localises to the endoplasmic reticulum lumen. Its subcellular location is the melanosome. It is found in the cytoplasm. The protein localises to the cell surface. It catalyses the reaction ATP + H2O = ADP + phosphate + H(+). With respect to regulation, the chaperone activity is regulated by ATP-induced allosteric coupling of the nucleotide-binding (NBD) and substrate-binding (SBD) domains. In the ADP-bound and nucleotide-free (apo) states, the two domains have little interaction. In contrast, in the ATP-bound state the two domains are tightly coupled, which results in drastically accelerated kinetics in both binding and release of polypeptide substrates. J domain-containing co-chaperones (DNAJB9/ERdj4 or DNAJC10/ERdj5) stimulate the ATPase activity and are required for efficient substrate recognition by HSPA5/BiP. Homooligomerization inactivates participating HSPA5/BiP protomers and probably act as reservoirs to store HSPA5/BiP molecules when they are not needed by the cell. Functionally, endoplasmic reticulum chaperone that plays a key role in protein folding and quality control in the endoplasmic reticulum lumen. Involved in the correct folding of proteins and degradation of misfolded proteins via its interaction with DNAJC10/ERdj5, probably to facilitate the release of DNAJC10/ERdj5 from its substrate. Acts as a key repressor of the EIF2AK3/PERK and ERN1/IRE1-mediated unfolded protein response (UPR). In the unstressed endoplasmic reticulum, recruited by DNAJB9/ERdj4 to the luminal region of ERN1/IRE1, leading to disrupt the dimerization of ERN1/IRE1, thereby inactivating ERN1/IRE1. Also binds and inactivates EIF2AK3/PERK in unstressed cells. Accumulation of misfolded protein in the endoplasmic reticulum causes release of HSPA5/BiP from ERN1/IRE1 and EIF2AK3/PERK, allowing their homodimerization and subsequent activation. May also play a role in apoptosis and cell proliferation. The chain is Endoplasmic reticulum chaperone BiP from Gallus gallus (Chicken).